We begin with the raw amino-acid sequence, 107 residues long: Ig kappa chain V-VI region TEPC 601/TEPC 191 (107 aa).

A framework-1 region spans residues 1 to 23; it reads EIVLTQSPAITAASLGQKVTITC. An intrachain disulfide couples Cys-23 to Cys-87. The complementarity-determining-1 stretch occupies residues 24-33; it reads SASSSVSYMH. A framework-2 region spans residues 34-48; the sequence is WYQQKSGTSPKPWIY. The interval 49–55 is complementarity-determining-2; the sequence is EISKLAS. Residues 56 to 87 are framework-3; that stretch reads GVPARFSGSGSGTSYSLTISSMEAEDAAIYYC. The tract at residues 88-96 is complementarity-determining-3; it reads QQWNYPLIT. The framework-4 stretch occupies residues 97–106; sequence FGAGTKLELK.

In Mus musculus (Mouse), this protein is Ig kappa chain V-VI region TEPC 601/TEPC 191.